Here is a 201-residue protein sequence, read N- to C-terminus: 3-isopropylmalate dehydratase small subunit (201 aa).

Belongs to the LeuD family. LeuD type 1 subfamily. In terms of assembly, heterodimer of LeuC and LeuD.

The catalysed reaction is (2R,3S)-3-isopropylmalate = (2S)-2-isopropylmalate. Its pathway is amino-acid biosynthesis; L-leucine biosynthesis; L-leucine from 3-methyl-2-oxobutanoate: step 2/4. Its function is as follows. Catalyzes the isomerization between 2-isopropylmalate and 3-isopropylmalate, via the formation of 2-isopropylmaleate. This is 3-isopropylmalate dehydratase small subunit from Agrobacterium fabrum (strain C58 / ATCC 33970) (Agrobacterium tumefaciens (strain C58)).